Consider the following 428-residue polypeptide: Cytochrome c biogenesis protein CcsB (428 aa).

Helical transmembrane passes span 14-34 (LRFA…GTFI), 72-92 (SNWF…CSFR), and 162-182 (LGPI…AYGN).

It belongs to the Ccs1/CcsB family. In terms of assembly, may interact with CcsA.

The protein resides in the cellular thylakoid membrane. In terms of biological role, required during biogenesis of c-type cytochromes (cytochrome c6 and cytochrome f) at the step of heme attachment. The sequence is that of Cytochrome c biogenesis protein CcsB from Prochlorococcus marinus subsp. pastoris (strain CCMP1986 / NIES-2087 / MED4).